The primary structure comprises 285 residues: Bifunctional protein FolD (285 aa).

Residues 165-167 (GAS) and Ile232 contribute to the NADP(+) site.

This sequence belongs to the tetrahydrofolate dehydrogenase/cyclohydrolase family. As to quaternary structure, homodimer.

It carries out the reaction (6R)-5,10-methylene-5,6,7,8-tetrahydrofolate + NADP(+) = (6R)-5,10-methenyltetrahydrofolate + NADPH. It catalyses the reaction (6R)-5,10-methenyltetrahydrofolate + H2O = (6R)-10-formyltetrahydrofolate + H(+). Its pathway is one-carbon metabolism; tetrahydrofolate interconversion. In terms of biological role, catalyzes the oxidation of 5,10-methylenetetrahydrofolate to 5,10-methenyltetrahydrofolate and then the hydrolysis of 5,10-methenyltetrahydrofolate to 10-formyltetrahydrofolate. This is Bifunctional protein FolD from Sulfurihydrogenibium sp. (strain YO3AOP1).